Here is a 394-residue protein sequence, read N- to C-terminus: Elongation factor Tu (394 aa).

The 195-residue stretch at 10–204 (KPHVNVGTIG…ALDNYIPEPE (195 aa)) folds into the tr-type G domain. The interval 19–26 (GHVDHGKT) is G1. 19–26 (GHVDHGKT) provides a ligand contact to GTP. Thr-26 is a binding site for Mg(2+). The G2 stretch occupies residues 60–64 (GITIS). The tract at residues 81–84 (DCPG) is G3. Residues 81 to 85 (DCPGH) and 136 to 139 (NKCD) each bind GTP. Residues 136-139 (NKCD) are G4. Residues 174–176 (SAL) are G5.

Belongs to the TRAFAC class translation factor GTPase superfamily. Classic translation factor GTPase family. EF-Tu/EF-1A subfamily. In terms of assembly, monomer.

The protein localises to the cytoplasm. The catalysed reaction is GTP + H2O = GDP + phosphate + H(+). Functionally, GTP hydrolase that promotes the GTP-dependent binding of aminoacyl-tRNA to the A-site of ribosomes during protein biosynthesis. This chain is Elongation factor Tu, found in Idiomarina loihiensis (strain ATCC BAA-735 / DSM 15497 / L2-TR).